Here is a 408-residue protein sequence, read N- to C-terminus: Diguanylate cyclase DgcN (408 aa).

Over 1-24 the chain is Cytoplasmic; it reads MMDNDNSLNKRPTFKRALRNISMT. A helical transmembrane segment spans residues 25–45; that stretch reads SIFITMMLIWLLLSVTSVLTL. The Periplasmic portion of the chain corresponds to 46–52; the sequence is KQYAQKN. A helical transmembrane segment spans residues 53-73; sequence LALTAATMTYSLEAAVVFADG. Over 74–112 the chain is Cytoplasmic; the sequence is PAATETLAALGQQGQFSTAEVRDKQQNILASWHYTRKDP. Residues 113–133 traverse the membrane as a helical segment; the sequence is GDTFSNFISHWLFPAPIIQPI. The Periplasmic segment spans residues 134 to 154; sequence RHNGETIGEVRLTARDSSISH. Residues 155–175 traverse the membrane as a helical segment; that stretch reads FIWFSLAVLTGCILLASGIAI. Residues 176-408 lie on the Cytoplasmic side of the membrane; it reads TLTRHLHNGL…KHQRAEKLVR (233 aa). Positions 183 to 236 constitute an HAMP domain; that stretch reads NGLVEALKNITDVVHDVRSNRNFSRRVSEERIAEFHRFALDFNSLLDEMEEWQL. Positions 278–408 constitute a GGDEF domain; it reads KTSALLFLDG…KHQRAEKLVR (131 aa). Position 286 (aspartate 286) interacts with Mg(2+). Substrate contacts are provided by asparagine 294, histidine 299, and aspartate 303. Aspartate 329 lines the Mg(2+) pocket. Aspartate 329 serves as the catalytic Proton acceptor.

In terms of assembly, homodimer. Interacts with the cell division proteins FtsZ and ZipA. Mg(2+) is required as a cofactor.

The protein resides in the cell inner membrane. It carries out the reaction 2 GTP = 3',3'-c-di-GMP + 2 diphosphate. It functions in the pathway purine metabolism; 3',5'-cyclic di-GMP biosynthesis. Its activity is regulated as follows. Inhibited by YfiR, which prevents relocation to the midcell. A reductive stress signal is required to inactivate YfiR and turn on the DGC activity of DgcN. In terms of biological role, bifunctional protein that catalyzes the synthesis of cyclic-di-GMP (c-di-GMP) in response to reductive stress and then dynamically relocates to the division site to arrest cell division in response to envelope stress. In the presence of high intracellular c-di-GMP levels, and in response to envelope stress, interacts with cell division proteins and halts cell division, without disassembling the Z ring, but by blocking its further progress toward cytokinesis. Part of a network that regulates cell motility by altering levels of c-di-GMP. The protein is Diguanylate cyclase DgcN of Escherichia coli (strain K12).